A 44-amino-acid chain; its full sequence is pyr operon leader peptide (44 aa).

The sequence is that of pyr operon leader peptide (pyrL) from Escherichia coli O157:H7.